The sequence spans 169 residues: MKLFFSIVLLVITLDQFTKKLALTFLRDGVQSITIIADLFSLTYAENRGVAFGLEFAPPTVLLLLTGVITIMVLAYVIWSKNRTTLFLLPFALITGGGIGNMIDRVMYGKVVDFIYFDLYQGHIFGRWVSLWPIFNIADSAITIGACMLMIFHNKLFPAESPTGTTDVR.

Helical transmembrane passes span 59–79 and 84–104; these read PTVLLLLTGVITIMVLAYVIW and TTLFLLPFALITGGGIGNMID. Catalysis depends on residues D113 and D139. Residues 132–152 form a helical membrane-spanning segment; the sequence is WPIFNIADSAITIGACMLMIF.

Belongs to the peptidase A8 family.

The protein resides in the cell inner membrane. It carries out the reaction Release of signal peptides from bacterial membrane prolipoproteins. Hydrolyzes -Xaa-Yaa-Zaa-|-(S,diacylglyceryl)Cys-, in which Xaa is hydrophobic (preferably Leu), and Yaa (Ala or Ser) and Zaa (Gly or Ala) have small, neutral side chains.. It participates in protein modification; lipoprotein biosynthesis (signal peptide cleavage). This protein specifically catalyzes the removal of signal peptides from prolipoproteins. The sequence is that of Lipoprotein signal peptidase from Pelodictyon phaeoclathratiforme (strain DSM 5477 / BU-1).